The chain runs to 412 residues: tRNA N6-adenosine threonylcarbamoyltransferase, mitochondrial (412 aa).

Residues M1–I78 constitute a mitochondrion transit peptide. Residues H157 and H161 each coordinate a divalent metal cation. Residues L179–G183, D212, A228, E232, R328–N329, and S363 each bind substrate. A divalent metal cation is bound at residue D364.

This sequence belongs to the KAE1 / TsaD family. In terms of assembly, homodimer. It depends on a divalent metal cation as a cofactor.

The protein resides in the mitochondrion. The enzyme catalyses L-threonylcarbamoyladenylate + adenosine(37) in tRNA = N(6)-L-threonylcarbamoyladenosine(37) in tRNA + AMP + H(+). Required for the formation of a threonylcarbamoyl group on adenosine at position 37 (t(6)A37) in mitochondrial tRNAs that read codons beginning with adenine. Probably involved in the transfer of the threonylcarbamoyl moiety of threonylcarbamoyl-AMP (TC-AMP) to the N6 group of A37. Involved in mitochondrial genome maintenance. The protein is tRNA N6-adenosine threonylcarbamoyltransferase, mitochondrial (pgp1) of Schizosaccharomyces pombe (strain 972 / ATCC 24843) (Fission yeast).